Reading from the N-terminus, the 4022-residue chain is Intermembrane lipid transfer protein VPS13B (4022 aa).

The region spanning 2–102 (LESYVTPILM…KDGIQDDHES (101 aa)) is the Chorein N-terminal domain. The segment at 100-134 (HESCGSNSTNRSTAESTKSSIKPRRMQQAAPTDPD) is disordered. A compositionally biased stretch (polar residues) spans 103 to 119 (CGSNSTNRSTAESTKSS). A phosphoserine mark is found at S414, S999, S1002, and S1033. Positions 1247–1314 (NLSPTSPETM…SVTLEQTTSN (68 aa)) are disordered. 2 stretches are compositionally biased toward polar residues: residues 1264–1292 (PVRS…TEGD) and 1302–1314 (FSDS…TTSN). S1815 is modified (phosphoserine). Basic and acidic residues predominate over residues 1860 to 1872 (KSQEQKNNEKTDK). The segment at 1860-1880 (KSQEQKNNEKTDKSSLNLPEV) is disordered. The region spanning 2631–2716 (HFVICNDTQE…RTASLIIKVQ (86 aa)) is the SHR-BD domain. The interval 3908–4022 (AFPVTEIDCA…KNKALRKGFP (115 aa)) is localizes the protein to the Golgi apparatus.

It belongs to the VPS13 family. Interacts with STX6. Interacts with STX12. Interacts with RAB6A isoform 1 (GTP-bound) and isoform 2 (GTP-bound). Interacts with RAB6B (GTP-bound). Widely expressed. There is apparent differential expression of different transcripts. In fetal brain, lung, liver, and kidney, two transcripts of 2 and 5 kb are identified. These transcripts are also seen in all adult tissues analyzed. A larger transcript (12-14 kb) is expressed in prostate, testis, ovary, and colon in the adult. Expression is very low in adult brain tissue. Expressed in peripheral blood lymphocytes. Isoform 1 and isoform 2 are expressed in brain and retina. Isoform 2 is expressed ubiquitously.

It is found in the recycling endosome membrane. The protein localises to the cytoplasmic vesicle. The protein resides in the secretory vesicle. Its subcellular location is the acrosome membrane. It localises to the golgi apparatus. It is found in the cis-Golgi network membrane. The protein localises to the endoplasmic reticulum-Golgi intermediate compartment membrane. The protein resides in the trans-Golgi network membrane. Its subcellular location is the early endosome membrane. It localises to the lysosome membrane. In terms of biological role, mediates the transfer of lipids between membranes at organelle contact sites. Binds phosphatidylinositol 3-phosphate. Functions as a tethering factor in the slow endocytic recycling pathway, to assist traffic between early and recycling endosomes. Involved in the transport of proacrosomal vesicles to the nuclear dense lamina (NDL) during spermatid development. Plays a role in the assembly of the Golgi apparatus, possibly by mediating trafficking to the Golgi membrane. Plays a role in the development of the nervous system, and may be required for neuron projection development. May also play a role during adipose tissue development. Required for maintenance of the ocular lens. In Homo sapiens (Human), this protein is Intermembrane lipid transfer protein VPS13B (VPS13B).